The sequence spans 363 residues: MAAQESLHVKTPLRDSMALSKVAGTSVFLKMDSSQPSGSFKIRGIGHLCKMKAKQGCKHFVCSSVVQIWGSRMRGRSHSGDEQPHVRSQALLPDTPSPLTAGNAGMATAYAARRLGLPATIVVPSTTPALTIERLKNEGATVEVVGEMLDEAIQLAKALEKNNPGWVYISPFDDPLIWEGHTSLVKELKETLSAKPGAIVLSVGGGGLLCGVVQGLREVGWEDVPIIAMETFGAHSFHAAVKEGKLVTLPKITSVAKALGVNTVGAQTLKLFYEHPIFSEVISDQEAVTAIEKFVDDEKILVEPACGAALAAVYSGVVCRLQAEGRLQTPLASLVVIVCGGSNISLAQLQALKAQLGLNELLK.

Ala-2 is modified (N-acetylalanine). The residue at position 41 (Lys-41) is an N6-(pyridoxal phosphate)lysine. Positions 74–98 are disordered; sequence RGRSHSGDEQPHVRSQALLPDTPSP. Pro-164 lines the pyridoxal 5'-phosphate pocket.

Belongs to the serine/threonine dehydratase family. In terms of assembly, homodimer. The cofactor is pyridoxal 5'-phosphate. As to expression, predominantly expressed in the periportal regions of the liver.

The protein localises to the cytoplasm. It carries out the reaction L-serine = pyruvate + NH4(+). It catalyses the reaction L-threonine = 2-oxobutanoate + NH4(+). The protein operates within carbohydrate biosynthesis; gluconeogenesis. Its function is as follows. Catalyzes the pyridoxal-phosphate-dependent dehydrative deamination of L-threonine and L-serine to ammonia and alpha-ketobutyrate and pyruvate, respectively. The polypeptide is L-serine dehydratase/L-threonine deaminase (Sds) (Rattus norvegicus (Rat)).